A 129-amino-acid chain; its full sequence is Small ribosomal subunit protein uS11 (129 aa).

Belongs to the universal ribosomal protein uS11 family. As to quaternary structure, part of the 30S ribosomal subunit. Interacts with proteins S7 and S18. Binds to IF-3.

In terms of biological role, located on the platform of the 30S subunit, it bridges several disparate RNA helices of the 16S rRNA. Forms part of the Shine-Dalgarno cleft in the 70S ribosome. The polypeptide is Small ribosomal subunit protein uS11 (Dechloromonas aromatica (strain RCB)).